The primary structure comprises 240 residues: Nuclear receptor-interacting protein 3 (240 aa).

The sequence is that of Nuclear receptor-interacting protein 3 (NRIP3) from Pongo abelii (Sumatran orangutan).